The primary structure comprises 601 residues: Elongation factor 4 (601 aa).

The 183-residue stretch at 7–189 (DTIRNFSIVA…AIVAKLPPPK (183 aa)) folds into the tr-type G domain. Residues 19–24 (DHGKST) and 136–139 (NKID) contribute to the GTP site.

Belongs to the TRAFAC class translation factor GTPase superfamily. Classic translation factor GTPase family. LepA subfamily.

Its subcellular location is the cell inner membrane. It catalyses the reaction GTP + H2O = GDP + phosphate + H(+). Its function is as follows. Required for accurate and efficient protein synthesis under certain stress conditions. May act as a fidelity factor of the translation reaction, by catalyzing a one-codon backward translocation of tRNAs on improperly translocated ribosomes. Back-translocation proceeds from a post-translocation (POST) complex to a pre-translocation (PRE) complex, thus giving elongation factor G a second chance to translocate the tRNAs correctly. Binds to ribosomes in a GTP-dependent manner. This Methylobacterium sp. (strain 4-46) protein is Elongation factor 4.